The chain runs to 119 residues: Large ribosomal subunit protein bL19 (119 aa).

Belongs to the bacterial ribosomal protein bL19 family.

Its function is as follows. This protein is located at the 30S-50S ribosomal subunit interface and may play a role in the structure and function of the aminoacyl-tRNA binding site. The protein is Large ribosomal subunit protein bL19 of Idiomarina loihiensis (strain ATCC BAA-735 / DSM 15497 / L2-TR).